A 245-amino-acid chain; its full sequence is Probable phosphatase YcdX (245 aa).

Zn(2+) contacts are provided by H7, H9, H15, H40, E73, H101, H131, D192, and H194.

Belongs to the PHP family. As to quaternary structure, homotrimer. It depends on Zn(2+) as a cofactor.

This Escherichia coli O127:H6 (strain E2348/69 / EPEC) protein is Probable phosphatase YcdX.